The following is a 203-amino-acid chain: Urease accessory protein UreG (203 aa).

Residue Gly-14–Thr-21 coordinates GTP.

Belongs to the SIMIBI class G3E GTPase family. UreG subfamily. As to quaternary structure, homodimer. UreD, UreF and UreG form a complex that acts as a GTP-hydrolysis-dependent molecular chaperone, activating the urease apoprotein by helping to assemble the nickel containing metallocenter of UreC. The UreE protein probably delivers the nickel.

It localises to the cytoplasm. In terms of biological role, facilitates the functional incorporation of the urease nickel metallocenter. This process requires GTP hydrolysis, probably effectuated by UreG. The polypeptide is Urease accessory protein UreG (Rhizobium leguminosarum bv. viciae).